A 417-amino-acid polypeptide reads, in one-letter code: NADH-quinone oxidoreductase subunit D (417 aa).

The protein belongs to the complex I 49 kDa subunit family. NDH-1 is composed of 14 different subunits. Subunits NuoB, C, D, E, F, and G constitute the peripheral sector of the complex.

The protein resides in the cell inner membrane. The catalysed reaction is a quinone + NADH + 5 H(+)(in) = a quinol + NAD(+) + 4 H(+)(out). NDH-1 shuttles electrons from NADH, via FMN and iron-sulfur (Fe-S) centers, to quinones in the respiratory chain. The immediate electron acceptor for the enzyme in this species is believed to be ubiquinone. Couples the redox reaction to proton translocation (for every two electrons transferred, four hydrogen ions are translocated across the cytoplasmic membrane), and thus conserves the redox energy in a proton gradient. This is NADH-quinone oxidoreductase subunit D from Burkholderia thailandensis (strain ATCC 700388 / DSM 13276 / CCUG 48851 / CIP 106301 / E264).